We begin with the raw amino-acid sequence, 149 residues long: Large ribosomal subunit protein uL13 (149 aa).

It belongs to the universal ribosomal protein uL13 family. Part of the 50S ribosomal subunit.

This protein is one of the early assembly proteins of the 50S ribosomal subunit, although it is not seen to bind rRNA by itself. It is important during the early stages of 50S assembly. This chain is Large ribosomal subunit protein uL13, found in Thermobifida fusca (strain YX).